The chain runs to 907 residues: Protein translocase subunit SecA (907 aa).

ATP is bound by residues Q87, 105 to 109, and D510; that span reads GEGKT. The Zn(2+) site is built by C892, C894, C903, and H904.

This sequence belongs to the SecA family. In terms of assembly, monomer and homodimer. Part of the essential Sec protein translocation apparatus which comprises SecA, SecYEG and auxiliary proteins SecDF-YajC and YidC. It depends on Zn(2+) as a cofactor.

It is found in the cell inner membrane. The protein localises to the cytoplasm. It catalyses the reaction ATP + H2O + cellular proteinSide 1 = ADP + phosphate + cellular proteinSide 2.. Its function is as follows. Part of the Sec protein translocase complex. Interacts with the SecYEG preprotein conducting channel. Has a central role in coupling the hydrolysis of ATP to the transfer of proteins into and across the cell membrane, serving both as a receptor for the preprotein-SecB complex and as an ATP-driven molecular motor driving the stepwise translocation of polypeptide chains across the membrane. The polypeptide is Protein translocase subunit SecA (Acinetobacter baumannii (strain AB0057)).